A 322-amino-acid polypeptide reads, in one-letter code: Acetyl-coenzyme A carboxylase carboxyl transferase subunit alpha (322 aa).

Residues 39–293 (RLAAKSQQLT…KRALAESLRQ (255 aa)) enclose the CoA carboxyltransferase C-terminal domain.

This sequence belongs to the AccA family. As to quaternary structure, acetyl-CoA carboxylase is a heterohexamer composed of biotin carboxyl carrier protein (AccB), biotin carboxylase (AccC) and two subunits each of ACCase subunit alpha (AccA) and ACCase subunit beta (AccD).

The protein localises to the cytoplasm. It carries out the reaction N(6)-carboxybiotinyl-L-lysyl-[protein] + acetyl-CoA = N(6)-biotinyl-L-lysyl-[protein] + malonyl-CoA. It functions in the pathway lipid metabolism; malonyl-CoA biosynthesis; malonyl-CoA from acetyl-CoA: step 1/1. In terms of biological role, component of the acetyl coenzyme A carboxylase (ACC) complex. First, biotin carboxylase catalyzes the carboxylation of biotin on its carrier protein (BCCP) and then the CO(2) group is transferred by the carboxyltransferase to acetyl-CoA to form malonyl-CoA. The protein is Acetyl-coenzyme A carboxylase carboxyl transferase subunit alpha of Ralstonia nicotianae (strain ATCC BAA-1114 / GMI1000) (Ralstonia solanacearum).